A 415-amino-acid polypeptide reads, in one-letter code: 3-isopropylmalate dehydratase large subunit (415 aa).

[4Fe-4S] cluster-binding residues include cysteine 295, cysteine 353, and cysteine 356.

The protein belongs to the aconitase/IPM isomerase family. LeuC type 2 subfamily. In terms of assembly, heterodimer of LeuC and LeuD. Requires [4Fe-4S] cluster as cofactor.

It carries out the reaction (2R,3S)-3-isopropylmalate = (2S)-2-isopropylmalate. The protein operates within amino-acid biosynthesis; L-leucine biosynthesis; L-leucine from 3-methyl-2-oxobutanoate: step 2/4. In terms of biological role, catalyzes the isomerization between 2-isopropylmalate and 3-isopropylmalate, via the formation of 2-isopropylmaleate. The chain is 3-isopropylmalate dehydratase large subunit from Pyrobaculum arsenaticum (strain DSM 13514 / JCM 11321 / PZ6).